The sequence spans 302 residues: Methionyl-tRNA formyltransferase (302 aa).

106-109 (SVLP) is a binding site for (6S)-5,6,7,8-tetrahydrofolate.

It belongs to the Fmt family.

The enzyme catalyses L-methionyl-tRNA(fMet) + (6R)-10-formyltetrahydrofolate = N-formyl-L-methionyl-tRNA(fMet) + (6S)-5,6,7,8-tetrahydrofolate + H(+). Attaches a formyl group to the free amino group of methionyl-tRNA(fMet). The formyl group appears to play a dual role in the initiator identity of N-formylmethionyl-tRNA by promoting its recognition by IF2 and preventing the misappropriation of this tRNA by the elongation apparatus. This Hydrogenobaculum sp. (strain Y04AAS1) protein is Methionyl-tRNA formyltransferase.